A 68-amino-acid chain; its full sequence is Antimicrobial peptide UyCT5 (68 aa).

A signal peptide spans 1 to 23 (MKNQFAILLLAVVFLQLISQSDA). At Leu36 the chain carries Leucine amide. Positions 40-68 (GLKNADRLDELFDGDISDADLDFLRELMR) are excised as a propeptide.

Belongs to the non-disulfide-bridged peptide (NDBP) superfamily. Short antimicrobial peptide (group 4) family. Expressed by the venom gland.

It localises to the secreted. The protein resides in the target cell membrane. Its function is as follows. Antimicrobial peptide that inhibits the growth of Gram-positive (S.aureus, MIC=1 uM) and Gram-negative bacteria (E.coli, MIC=15 uM and P.aeruginosa, MIC=2 uM). It also shows 37% of hemolysis when 15 uM are tested (93% at 50 uM). The sequence is that of Antimicrobial peptide UyCT5 from Urodacus yaschenkoi (Inland robust scorpion).